Reading from the N-terminus, the 234-residue chain is Large ribosomal subunit protein uL1 (234 aa).

This sequence belongs to the universal ribosomal protein uL1 family. As to quaternary structure, part of the 50S ribosomal subunit.

In terms of biological role, binds directly to 23S rRNA. The L1 stalk is quite mobile in the ribosome, and is involved in E site tRNA release. Functionally, protein L1 is also a translational repressor protein, it controls the translation of the L11 operon by binding to its mRNA. The chain is Large ribosomal subunit protein uL1 from Prochlorococcus marinus (strain MIT 9211).